The sequence spans 121 residues: MLTKKEQRLRRSRQTRIRIANQGVARLSVNRTNLHIYASVISGDGTKVLASASTAEVEVRNEIGGSGKGGNVAAAQAIGKRIAEKAKAAGVEKVAFDRAGFAYHGRVKALADAAREAGLQF.

Belongs to the universal ribosomal protein uL18 family. Part of the 50S ribosomal subunit; part of the 5S rRNA/L5/L18/L25 subcomplex. Contacts the 5S and 23S rRNAs.

This is one of the proteins that bind and probably mediate the attachment of the 5S RNA into the large ribosomal subunit, where it forms part of the central protuberance. The chain is Large ribosomal subunit protein uL18 from Polaromonas naphthalenivorans (strain CJ2).